The following is a 793-amino-acid chain: E3 ubiquitin-protein ligase UHRF1 (793 aa).

The region spanning 1–78 is the Ubiquitin-like domain; that stretch reads MWIQVRTMDG…IQLLVRQSLV (78 aa). Phosphoserine is present on residues Ser76, Ser91, Ser95, and Ser165. The interval 82 to 124 is disordered; the sequence is STKERDSELSDTDSGCCLGQSESDKSSTHGEAAAETDSRPADE. Tudor-like regions lie at residues 133 to 209 and 216 to 283; these read GLYK…ARAR and DLEV…IERP. Lys279 participates in a covalent cross-link: Glycyl lysine isopeptide (Lys-Gly) (interchain with G-Cter in SUMO2). Ser287 carries the post-translational modification Phosphoserine. A linker region spans residues 296 to 301; sequence RKSGPS. Position 298 is a phosphoserine; by PKA (Ser298). The PHD-type zinc-finger motif lies at 310-366; that stretch reads NRLCRVCACHLCGGRQDPDKQLMCDECDMAFHIYCLDPPLSSVPSEDEWYCPECRND. 2 histone H3R2me0 binding regions span residues 333 to 337 and 353 to 355; these read CDECD and PSE. At Ser368 the chain carries Phosphoserine. Residue Lys385 forms a Glycyl lysine isopeptide (Lys-Gly) (interchain with G-Cter in SUMO2) linkage. Lys399 bears the N6-acetyllysine mark. One can recognise a YDG domain in the interval 419 to 582; the sequence is GPIPGIPVGT…FLVWRYLLRR (164 aa). The segment at 445–446 is required to promote base flipping; that stretch reads HV. Residues 463–464 and Asp469 each bind DNA; that span reads AG. 2 required for formation of a 5-methylcytosine-binding pocket regions span residues 466–469 and 478–481; these read YEDD and YTGS. The residue at position 546 (Lys546) is an N6-acetyllysine; alternate. Residue Lys546 forms a Glycyl lysine isopeptide (Lys-Gly) (interchain with G-Cter in SUMO2); alternate linkage. The span at 618 to 629 shows a compositional bias: basic and acidic residues; it reads REREKENSKREE. Residues 618–673 are disordered; it reads REREKENSKREEEEQQEGGFASPRTGKGKWKRKSAGGGPSRAGSPRRTSKKTKVEP. At Ser639 the chain carries Phosphoserine; by CDK1. Ser651 carries the phosphoserine modification. A Glycyl lysine isopeptide (Lys-Gly) (interchain with G-Cter in SUMO2) cross-link involves residue Lys670. A phosphoserine mark is found at Ser707 and Ser709. Residues 724–763 form an RING-type zinc finger; that stretch reads CICCQELVFRPITTVCQHNVCKDCLDRSFRAQVFSCPACR.

Interacts with DNMT3A and DNMT3B. Interacts with DNMT1; the interaction is direct. Interacts with USP7; leading to its deubiquitination. Interacts with histone H3. Interacts with HDAC1, but not with HDAC2. Interacts with BLTP3A. Interacts with PML. Interacts with EHMT2. Binds hemimethylated CpG containing oligonucleotides. Interacts with ZNF263; recruited to the SIX3 promoter along with other proteins involved in chromatin modification and transcriptional corepression where it contributes to transcriptional repression. Interacts with UHRF2. Interacts with FANCD2. Interacts with TET1 isoform 2; this interaction induces the recruitment of TET1 isoform 2 to replicating heterochromatin. Post-translationally, phosphorylation at Ser-298 of the linker region decreases the binding to H3K9me3. Phosphorylation at Ser-639 by CDK1 during M phase impairs interaction with USP7, preventing deubiquitination and leading to degradation by the proteasome. Ubiquitinated; which leads to proteasomal degradation. Autoubiquitinated; interaction with USP7 leads to deubiquitination and prevents degradation. Ubiquitination and degradation takes place during M phase, when phosphorylation at Ser-639 prevents interaction with USP7 and subsequent deubiquitination. Polyubiquitination may be stimulated by DNA damage. As to expression, expressed in thymus, bone marrow, testis, lung and heart. Overexpressed in breast cancer.

The protein localises to the nucleus. It carries out the reaction S-ubiquitinyl-[E2 ubiquitin-conjugating enzyme]-L-cysteine + [acceptor protein]-L-lysine = [E2 ubiquitin-conjugating enzyme]-L-cysteine + N(6)-ubiquitinyl-[acceptor protein]-L-lysine.. It functions in the pathway protein modification; protein ubiquitination. In terms of biological role, multidomain protein that acts as a key epigenetic regulator by bridging DNA methylation and chromatin modification. Specifically recognizes and binds hemimethylated DNA at replication forks via its YDG domain and recruits DNMT1 methyltransferase to ensure faithful propagation of the DNA methylation patterns through DNA replication. In addition to its role in maintenance of DNA methylation, also plays a key role in chromatin modification: through its tudor-like regions and PHD-type zinc fingers, specifically recognizes and binds histone H3 trimethylated at 'Lys-9' (H3K9me3) and unmethylated at 'Arg-2' (H3R2me0), respectively, and recruits chromatin proteins. Enriched in pericentric heterochromatin where it recruits different chromatin modifiers required for this chromatin replication. Also localizes to euchromatic regions where it negatively regulates transcription possibly by impacting DNA methylation and histone modifications. Has E3 ubiquitin-protein ligase activity by mediating the ubiquitination of target proteins such as histone H3 and PML. It is still unclear how E3 ubiquitin-protein ligase activity is related to its role in chromatin in vivo. Plays a role in DNA repair by cooperating with UHRF2 to ensure recruitment of FANCD2 to interstrand cross-links (ICLs) leading to FANCD2 activation. Acts as a critical player of proper spindle architecture by catalyzing the 'Lys-63'-linked ubiquitination of KIF11, thereby controlling KIF11 localization on the spindle. The polypeptide is E3 ubiquitin-protein ligase UHRF1 (UHRF1) (Homo sapiens (Human)).